Here is a 233-residue protein sequence, read N- to C-terminus: Protein Thf1 (233 aa).

Residues 183 to 204 (DKFSKDLELYRSNLDKMTQALA) adopt a coiled-coil conformation. The tract at residues 212-233 (ADRKKREQRQQQASTPVAPPNE) is disordered.

The protein belongs to the THF1 family.

Functionally, may be involved in photosynthetic membrane biogenesis. In Nostoc sp. (strain PCC 7120 / SAG 25.82 / UTEX 2576), this protein is Protein Thf1.